A 107-amino-acid chain; its full sequence is Antimicrobial peptide damicornin (107 aa).

The first 22 residues, 1–22 (MKVLVILFGAMLVLMEFQKASA), serve as a signal peptide directing secretion. A propeptide spanning residues 23–67 (ATLLEDFDDDDDLLDDGGDFDLEANSDASSGNGNDSNDAVPEKRR) is cleaved from the precursor. Residues 37–46 (DDGGDFDLEA) show a composition bias toward acidic residues. The tract at residues 37-62 (DDGGDFDLEANSDASSGNGNDSNDAV) is disordered. Over residues 47–61 (NSDASSGNGNDSNDA) the composition is skewed to low complexity. Disulfide bonds link cysteine 69/cysteine 105, cysteine 78/cysteine 99, and cysteine 85/cysteine 103. Residue arginine 106 is modified to Arginine amide.

It belongs to the coral AMP family. As to expression, is specifically expressed in the granular cells of the ectoderm.

It is found in the cytoplasm. The protein resides in the stress granule. Its subcellular location is the secreted. Functionally, cationic peptide with probable antimicrobial activity against coral pathogens. Shows in vitro activity against Gram-positive bacteria and the filamentous fungus F.oxysporum (MIC=1.25 uM). Gram-positive bacteria tested are B.megaterium (MIC=20 uM), S.aureus (MIC=5 uM), M. luteus (MIC=1.25 uM), B.stationis (MIC=10 uM), M.maritypicum (MIC=20 uM). Has no or little effect against Gram-negative bacteria (the coral pathogen V.coralliilyticus (MIC&gt;20 uM), V.aesturianus (MIC&gt;20 uM), V.shiloi (MIC&gt;20 uM), and E.coli (MIC=10 uM)). Has no hemolytic activity against sheep erythrocytes. The sequence is that of Antimicrobial peptide damicornin from Pocillopora damicornis (Cauliflower coral).